The sequence spans 403 residues: CCA-adding enzyme (403 aa).

Gly32 and Arg35 together coordinate ATP. CTP is bound by residues Gly32 and Arg35. Mg(2+)-binding residues include Asp45 and Asp47. Positions 116, 159, 162, 165, and 168 each coordinate ATP. CTP contacts are provided by Arg116, Asp159, Arg162, Arg165, and Arg168.

This sequence belongs to the tRNA nucleotidyltransferase/poly(A) polymerase family. Bacterial CCA-adding enzyme type 3 subfamily. In terms of assembly, homodimer. It depends on Mg(2+) as a cofactor.

It catalyses the reaction a tRNA precursor + 2 CTP + ATP = a tRNA with a 3' CCA end + 3 diphosphate. The catalysed reaction is a tRNA with a 3' CCA end + 2 CTP + ATP = a tRNA with a 3' CCACCA end + 3 diphosphate. Its function is as follows. Catalyzes the addition and repair of the essential 3'-terminal CCA sequence in tRNAs without using a nucleic acid template. Adds these three nucleotides in the order of C, C, and A to the tRNA nucleotide-73, using CTP and ATP as substrates and producing inorganic pyrophosphate. tRNA 3'-terminal CCA addition is required both for tRNA processing and repair. Also involved in tRNA surveillance by mediating tandem CCA addition to generate a CCACCA at the 3' terminus of unstable tRNAs. While stable tRNAs receive only 3'-terminal CCA, unstable tRNAs are marked with CCACCA and rapidly degraded. The chain is CCA-adding enzyme from Streptococcus suis (strain 98HAH33).